A 633-amino-acid polypeptide reads, in one-letter code: Extracellular metalloproteinase 3 (633 aa).

A signal peptide spans 1–18; the sequence is MHGLLLAGLLALPMNVLA. The propeptide occupies 19–246; sequence HPAEQHASNV…VHNVVDYVAS (228 aa). N410 carries N-linked (GlcNAc...) asparagine glycosylation. H429 is a Zn(2+) binding site. E430 is a catalytic residue. Residue H433 participates in Zn(2+) binding. N-linked (GlcNAc...) asparagine glycans are attached at residues N480 and N622.

It belongs to the peptidase M36 family. Zn(2+) serves as cofactor.

The protein resides in the secreted. In terms of biological role, secreted metalloproteinase probably acting as a virulence factor. This Arthroderma benhamiae (Trichophyton mentagrophytes) protein is Extracellular metalloproteinase 3 (MEP3).